An 86-amino-acid polypeptide reads, in one-letter code: Small ribosomal subunit protein bS20 (86 aa).

The tract at residues 1 to 25 (MANIKSQQKRNKTNERARLRNKSVK) is disordered.

Belongs to the bacterial ribosomal protein bS20 family.

Its function is as follows. Binds directly to 16S ribosomal RNA. This chain is Small ribosomal subunit protein bS20, found in Mycobacterium avium (strain 104).